A 2006-amino-acid chain; its full sequence is Sodium channel protein type 2 subunit alpha (2006 aa).

Residue S4 is modified to Phosphoserine. Residues 28–61 are disordered; the sequence is RIAEEKAKRPKQERKDEDDENGPKPNSDLEAGKS. K38 is covalently cross-linked (Glycyl lysine isopeptide (Lys-Gly) (interchain with G-Cter in SUMO1)). The stretch at 111 to 456 is one I repeat; the sequence is ILTPFNPIRK…QQMLEQLKKQ (346 aa). Residues 130–148 form a helical membrane-spanning segment; that stretch reads LFNVLIMCTILTNCVFMTM. A helical transmembrane segment spans residues 156-176; that stretch reads KNVEYTFTGIYTFESLIKILA. Residues 191-208 traverse the membrane as a helical segment; sequence WNWLDFTVITFAYVTEFV. Residues 215-231 form a helical membrane-spanning segment; sequence ALRTFRVLRALKTISVI. The helical transmembrane segment at 251–270 threads the bilayer; that stretch reads VMILTVFCLSVFALIGLQLF. C278 and C338 are oxidised to a cystine. Residues N285, N291, N297, N303, N308, and N340 are each glycosylated (N-linked (GlcNAc...) asparagine). An intramembrane region (pore-forming) is located at residues 370 to 394; the sequence is FSWAFLSLFRLMTQDFWENLYQLTL. The chain crosses the membrane as a helical span at residues 402-422; the sequence is MIFFVLVIFLGSFYLINLILA. Phosphoserine is present on residues S468, S471, S484, S526, S528, S531, S553, S554, S558, S573, S576, S589, S610, S623, S687, S688, and S722. Residues 494-529 are disordered; sequence SSKSEKELKNRRKKKKQKEQAGEEEKEDAVRKSASE. Basic and acidic residues predominate over residues 511 to 529; it reads KEQAGEEEKEDAVRKSASE. Residues 589 to 635 form a disordered region; the sequence is SENDFADDEHSTFEDNDSRRDSLFVPHRHGERRPSNVSQASRASRGI. Basic and acidic residues predominate over residues 596 to 610; that stretch reads DEHSTFEDNDSRRDS. One copy of the II repeat lies at 742 to 1014; that stretch reads CCKPWLKVKH…QIAVGRMQKG (273 aa). The helical transmembrane segment at 761–779 threads the bilayer; sequence FVDLAITICIVLNTLFMAM. The helical transmembrane segment at 791 to 810 threads the bilayer; sequence VLSVGNLVFTGIFTAEMFLK. Residues 825-844 traverse the membrane as a helical segment; it reads NIFDGFIVSLSLMELGLANV. The helical transmembrane segment at 847 to 864 threads the bilayer; that stretch reads LSVLRSFRLLRVFKLAKS. The chain crosses the membrane as a helical span at residues 881–899; it reads ALGNLTLVLAIIVFIFAVV. An intrachain disulfide couples C913 to C919. Positions 918-919 are binds SCN2B; it reads DC. Positions 929 to 949 form an intramembrane region, pore-forming; that stretch reads FFHSFLIVFRVLCGEWIETMW. C951 and C960 are disulfide-bonded. The chain crosses the membrane as a helical span at residues 963-983; that stretch reads VFMMVMVIGNLVVLNLFLALL. A disordered region spans residues 1121–1167; the sequence is EEFSSESDMEESKEKLNATSSSEGSTVDIGAPAEGEQPEAEPEESLE. Acidic residues predominate over residues 1156 to 1167; it reads EQPEAEPEESLE. An III repeat occupies 1191–1505; that stretch reads KGKLWWNLRK…KKYYNAMKKL (315 aa). The helical transmembrane segment at 1211–1228 threads the bilayer; sequence FETFIVFMILLSSGALAF. The helical transmembrane segment at 1242-1260 threads the bilayer; that stretch reads MLEYADKVFTYIFILEMLL. Residues 1275 to 1293 traverse the membrane as a helical segment; that stretch reads WCWLDFLIVDVSLVSLTAN. The chain crosses the membrane as a helical span at residues 1302–1320; the sequence is AIKSLRTLRALRPLRALSR. A helical transmembrane segment spans residues 1338–1357; sequence IMNVLLVCLIFWLIFSIMGV. C1367 and C1387 are oxidised to a cystine. The segment at residues 1410-1431 is an intramembrane region (pore-forming); that stretch reads GLGYLSLLQVATFKGWMDIMYA. Residues 1449-1470 traverse the membrane as a helical segment; it reads YMYLYFVIFIIFGSFFTLNLFI. Phosphoserine is present on S1507. The stretch at 1514–1812 is one IV repeat; that stretch reads IPRPANKFQG…WEKFDPDATQ (299 aa). The chain crosses the membrane as a helical span at residues 1534-1551; the sequence is FDISIMILICLNMVTMMV. A helical transmembrane segment spans residues 1563–1581; it reads ILYWINLVFIVLFTGECVL. A helical membrane pass occupies residues 1594–1611; the sequence is GWNIFDFVVVILSIVGMF. Residues 1625–1641 form a helical membrane-spanning segment; it reads LFRVIRLARIGRILRLI. A helical membrane pass occupies residues 1661–1678; sequence LFNIGLLLFLVMFIYAIF. Positions 1701–1723 form an intramembrane region, pore-forming; sequence FGNSMICLFQITTSAGWDGLLAP. Residues C1732 and C1747 are joined by a disulfide bond. A helical membrane pass occupies residues 1754 to 1776; it reads IFFFVSYIIISFLVVVNMYIAVI. Residues 1906–1935 enclose the IQ domain; it reads EEVSAIVIQRAYRRYLLKQKVKKVSSIYKK. A Phosphoserine modification is found at S1931. Residues 1934 to 1965 are compositionally biased toward basic and acidic residues; it reads KKDKGKEDEGTPIKEDIITDKLNENSTPEKTD. The disordered stretch occupies residues 1934 to 2006; sequence KKDKGKEDEG…KGKDIRESKK (73 aa). T1944, T1964, and T1967 each carry phosphothreonine. Position 1972 is a phosphoserine (S1972). Residues 1980-2006 show a composition bias toward basic and acidic residues; the sequence is TKPEKEKFEKDKSEKEDKGKDIRESKK.

The protein belongs to the sodium channel (TC 1.A.1.10) family. Nav1.2/SCN2A subfamily. Heterooligomer of a large alpha subunit and a smaller beta subunit. Heterooligomer with SCN2B or SCN4B; disulfide-linked. Interacts with NEDD4L. Interacts with CALM. Interacts with TMEM233. In terms of processing, sumoylated at Lys-38. Sumoylation is induced by hypoxia, increases voltage-gated sodium current and mediates the early response to acute hypoxia in neurons. Sumoylated SCN2A is located at the cell membrane. As to expression, expressed in brain (at protein level). Detected in hippocampus, cortex and brain stem.

It is found in the cell membrane. The enzyme catalyses Na(+)(in) = Na(+)(out). Functionally, mediates the voltage-dependent sodium ion permeability of excitable membranes. Assuming opened or closed conformations in response to the voltage difference across the membrane, the protein forms a sodium-selective channel through which Na(+) ions may pass in accordance with their electrochemical gradient. Implicated in the regulation of hippocampal replay occurring within sharp wave ripples (SPW-R) important for memory. This Mus musculus (Mouse) protein is Sodium channel protein type 2 subunit alpha.